We begin with the raw amino-acid sequence, 205 residues long: Carboxysome shell protein CsoS1D (205 aa).

BMC circularly permuted domains follow at residues 3 to 100 and 106 to 205; these read ELRT…TREY and VVMW…TCRS. Positions 68-69 match the Gates the pore motif; it reads ER.

It belongs to the EutL/PduB family. In terms of assembly, homotrimer. Forms a dimer of stacked trimers, the same faces interact. Probably forms a CsoS1-CsoS1D-CsoS2 complex.

It is found in the carboxysome. Part of the carboxysome shell, a polyhedral inclusion where RuBisCO (ribulose bisphosphate carboxylase, cbbL-cbbS) is sequestered. It may control transport of RuBisCO reactants in and out of the carboxysome. This chain is Carboxysome shell protein CsoS1D, found in Hydrogenovibrio crunogenus (strain DSM 25203 / XCL-2) (Thiomicrospira crunogena).